A 367-amino-acid polypeptide reads, in one-letter code: Transcription factor aptf-2 (367 aa).

Positions 29-49 are disordered; it reads VPATKETGPSSSAECSTQPAV. Residues 36–47 are compositionally biased toward polar residues; that stretch reads GPSSSAECSTQP. Residues 220–354 form an H-S-H (helix-span-helix), dimerization region; sequence AKQKAFPNKV…GVASELRRLT (135 aa).

It belongs to the AP-2 family. As to quaternary structure, binds DNA as a dimer.

Its subcellular location is the nucleus. The protein resides in the cytoplasm. Its function is as follows. Sequence-specific DNA-binding protein that interacts with enhancer elements to regulate transcription of selected genes. Required for neuroblast and epidermal morphogenesis, perhaps acting in cooperation with transcription factor aptf-4. The chain is Transcription factor aptf-2 from Caenorhabditis elegans.